A 172-amino-acid polypeptide reads, in one-letter code: Ribosome maturation factor RimM (172 aa).

The PRC barrel domain maps to 96-168 (DGEFYYHEII…RVDVELLEGL (73 aa)).

The protein belongs to the RimM family. Binds ribosomal protein uS19.

The protein resides in the cytoplasm. Its function is as follows. An accessory protein needed during the final step in the assembly of 30S ribosomal subunit, possibly for assembly of the head region. Essential for efficient processing of 16S rRNA. May be needed both before and after RbfA during the maturation of 16S rRNA. It has affinity for free ribosomal 30S subunits but not for 70S ribosomes. The protein is Ribosome maturation factor RimM of Streptococcus suis (strain 05ZYH33).